The sequence spans 173 residues: Disulfide bond formation protein B 2 (173 aa).

Topologically, residues 1–9 are cytoplasmic; that stretch reads MSLAGSRLL. The helical transmembrane segment at 10 to 26 threads the bilayer; it reads FSLVFLVGALASWAAFN. Topologically, residues 27-44 are periplasmic; that stretch reads LQTGGGLESCSLWSVQRL. A helical membrane pass occupies residues 45–61; the sequence is LLLALGGVNLLAVIQGP. Residues 62-67 are Cytoplasmic-facing; it reads GRVGRA. Residues 68–85 form a helical membrane-spanning segment; it reads VYWGLNLLLGLLGVVTAG. The Periplasmic segment spans residues 86 to 142; that stretch reads RHVLLQNIPSEQLLACLPDMSFMLRQLSWWQALKLTFMGTSDCAEVTWTLLDMSLPE. Residues Cys101 and Cys128 are joined by a disulfide bond. The chain crosses the membrane as a helical span at residues 143–161; the sequence is WSLLFFVIMLIFSGYRLWR. At 162-173 the chain is on the cytoplasmic side; sequence QLRGARKAVALP.

This sequence belongs to the DsbB family.

Its subcellular location is the cell inner membrane. In terms of biological role, required for disulfide bond formation in some periplasmic proteins. Acts by oxidizing the DsbA protein. This Pseudomonas fluorescens (strain ATCC BAA-477 / NRRL B-23932 / Pf-5) protein is Disulfide bond formation protein B 2.